A 544-amino-acid chain; its full sequence is Cytochrome P450 2U1 (544 aa).

The next 4 membrane-spanning stretches (helical) occupy residues 30-50 (LDPS…GWSW), 113-133 (VYGS…LSDF), 261-281 (ICLN…YLPF), and 342-362 (LFYI…NSLL). Cys490 provides a ligand contact to heme. A helical membrane pass occupies residues 495–515 (LAKMELFLMFVSLMQSFAFAL).

This sequence belongs to the cytochrome P450 family. Heme serves as cofactor. In terms of tissue distribution, widely expressed with stronger expression in thymus, heart and cerebellum.

The protein resides in the endoplasmic reticulum membrane. It is found in the microsome membrane. The protein localises to the mitochondrion inner membrane. It carries out the reaction an omega-methyl-long-chain fatty acid + reduced [NADPH--hemoprotein reductase] + O2 = an omega-hydroxy-long-chain fatty acid + oxidized [NADPH--hemoprotein reductase] + H2O + H(+). It catalyses the reaction (5Z,8Z,11Z,14Z)-eicosatetraenoate + reduced [NADPH--hemoprotein reductase] + O2 = 19-hydroxy-(5Z,8Z,11Z,14Z)-eicosatetraenoate + oxidized [NADPH--hemoprotein reductase] + H2O + H(+). The catalysed reaction is (5Z,8Z,11Z,14Z)-eicosatetraenoate + reduced [NADPH--hemoprotein reductase] + O2 = 20-hydroxy-(5Z,8Z,11Z,14Z)-eicosatetraenoate + oxidized [NADPH--hemoprotein reductase] + H2O + H(+). The enzyme catalyses N-[(5Z,8Z,11Z,14Z)-eicosatetraenoyl]-serotonin + reduced [NADPH--hemoprotein reductase] + O2 = 2-oxo-N-[(5Z,8Z,11Z,14Z)-eicosatetraenoyl]-serotonin + oxidized [NADPH--hemoprotein reductase] + H2O + H(+). It functions in the pathway lipid metabolism; arachidonate metabolism. In terms of biological role, a cytochrome P450 monooxygenase involved in the metabolism of arachidonic acid and its conjugates. Mechanistically, uses molecular oxygen inserting one oxygen atom into a substrate, and reducing the second into a water molecule, with two electrons provided by NADPH via cytochrome P450 reductase (CPR; NADPH-ferrihemoprotein reductase). Acts as an omega and omega-1 hydroxylase for arachidonic acid and possibly for other long chain fatty acids. May modulate the arachidonic acid signaling pathway and play a role in other fatty acid signaling processes. May down-regulate the biological activities of N-arachidonoyl-serotonin, an endocannabinoid that has anti-nociceptive effects through inhibition of fatty acid amide hydrolase FAAH, TRPV1 receptor and T-type calcium channels. Catalyzes C-2 oxidation of the indole ring of N-arachidonoyl-serotonin forming a less active product 2-oxo-N-arachidonoyl-serotonin. In Homo sapiens (Human), this protein is Cytochrome P450 2U1.